A 440-amino-acid polypeptide reads, in one-letter code: MSLDAVWAPQTANIGDGPAKKASDQTSMQTQVLQTASLRDGPAKRAVWVRRDNAEKEEPVKSAVSKDRPRLEVTKAVVVDLGTGFCKCGFAGLPKPTHKISTTVGKPYMETAKTGDNRKETFVGRELFNPDIHLKLVNPLRHGIIVDWDTVQDIWEYLFRQEMKIAPEEHAVLVSDPPLSPHTNREKYAEMLFETFNTPAMHIAYQSRLSMYSYGRTSGLVVEVGHGVSYVVPIYEGYPLPSITGRLDYAGSDLTNYLMNLMNNCGKHFSEDHLSIVEDIKTKCCFVALDPIEEKKIPPSEHEIHYTLPDGKEIRLGQERFLCSEMFFKPSLIKSMQLGLHTQTVSCLNKCDIALKRDLMGNILLCGGSTMLRGFPNRLQKELSSMCPNDTPQVNVLPERDTAVWTGGSILASLQGFQPLWVHRLEYEEHGPFFLYRRCF.

Positions methionine 1–serine 27 are disordered. A required for interaction with TES region spans residues alanine 36–lysine 56.

Belongs to the actin family. Interacts (via N-terminus) with TES (via LIM domain 2). Heterodimer with TES; the heterodimer interacts with ENAH to form a heterotrimer. Interacts with ACTL9. Interacts with CYLC1; the interaction may be relevant for proper acrosome attachment to the nuclear envelope. In terms of tissue distribution, detected in testis. Detected at the acrosome of round spermatids (at protein level).

The protein resides in the cytoplasm. The protein localises to the cytoskeleton. It is found in the golgi apparatus. Its subcellular location is the nucleus. Its function is as follows. Essential for normal spermatogenesis and male fertility. Required for normal sperm head morphology, acroplaxome formation, acrosome attachment, and acrosome granule stability. May anchor and stabilize acrosomal adherence to the acroplaxome at least in part by facilitating the presence of F-actin in the subacrosomal space. May play an important role in formation and fusion of Golgi-derived vesicles during acrosome biogenesis. This chain is Actin-like protein 7A (Actl7a), found in Rattus norvegicus (Rat).